The following is a 215-amino-acid chain: Adenylate kinase (215 aa).

An ATP-binding site is contributed by 10–15 (GAGKGT). The interval 30 to 59 (STGDMLRSAIKSGSELGKKAKQVMDAGQLV) is NMP. AMP-binding positions include threonine 31, arginine 36, 57–59 (QLV), 85–88 (GFPR), and glutamine 92. Positions 122–159 (GRRVHPGSGRVYHVEHNPPKVEGKDDETGEDLVVRPDD) are LID. Residues arginine 123 and 132-133 (VY) each bind ATP. The segment at 128-151 (GSGRVYHVEHNPPKVEGKDDETGE) is disordered. Residues 133-144 (YHVEHNPPKVEG) show a composition bias toward basic and acidic residues. Positions 156 and 167 each coordinate AMP. A disordered region spans residues 195–215 (KIDGTQPVERVSEQLGDLLRK). Glutamine 200 serves as a coordination point for ATP.

The protein belongs to the adenylate kinase family. In terms of assembly, monomer.

The protein localises to the cytoplasm. It carries out the reaction AMP + ATP = 2 ADP. It participates in purine metabolism; AMP biosynthesis via salvage pathway; AMP from ADP: step 1/1. Catalyzes the reversible transfer of the terminal phosphate group between ATP and AMP. Plays an important role in cellular energy homeostasis and in adenine nucleotide metabolism. The chain is Adenylate kinase from Idiomarina loihiensis (strain ATCC BAA-735 / DSM 15497 / L2-TR).